A 185-amino-acid polypeptide reads, in one-letter code: Ovomucoid (185 aa).

3 Kazal-like domains span residues 1-63 (VEVD…ECRE), 64-128 (AVPM…ECRK), and 131-185 (AAVS…FGKC). 9 disulfide bridges follow: C5–C43, C22–C40, C30–C61, C69–C108, C86–C105, C94–C126, C137–C167, C145–C164, and C153–C185. The N-linked (GlcNAc...) asparagine glycan is linked to N174.

The protein resides in the secreted. This is Ovomucoid from Meleagris gallopavo (Wild turkey).